The primary structure comprises 422 residues: S-adenosylmethionine synthase (422 aa).

Histidine 15 contacts ATP. Aspartate 17 provides a ligand contact to Mg(2+). Glutamate 43 is a binding site for K(+). L-methionine contacts are provided by glutamate 56 and glutamine 99. Residues 99 to 109 are flexible loop; sequence QSPDISRGVTE. ATP is bound by residues 166 to 168, 232 to 233, aspartate 241, 247 to 248, alanine 264, and lysine 268; these read DGK, RF, and RK. Aspartate 241 lines the L-methionine pocket. Lysine 272 contacts L-methionine. Residues 390-422 form a disordered region; the sequence is AVPATTNGAGSKNGSGSKKEPKRKGKKETGAQA.

Belongs to the AdoMet synthase family. As to quaternary structure, homotetramer; dimer of dimers. Mg(2+) is required as a cofactor. It depends on K(+) as a cofactor.

The protein localises to the cytoplasm. The enzyme catalyses L-methionine + ATP + H2O = S-adenosyl-L-methionine + phosphate + diphosphate. The protein operates within amino-acid biosynthesis; S-adenosyl-L-methionine biosynthesis; S-adenosyl-L-methionine from L-methionine: step 1/1. In terms of biological role, catalyzes the formation of S-adenosylmethionine (AdoMet) from methionine and ATP. The overall synthetic reaction is composed of two sequential steps, AdoMet formation and the subsequent tripolyphosphate hydrolysis which occurs prior to release of AdoMet from the enzyme. The sequence is that of S-adenosylmethionine synthase from Sorangium cellulosum (strain So ce56) (Polyangium cellulosum (strain So ce56)).